A 553-amino-acid chain; its full sequence is Phospholipase B (553 aa).

The signal sequence occupies residues 1 to 35 (MIRFGNPSSSDKRRQRCRSWYWGGLLLLWAVAETR). N313, N416, and N531 each carry an N-linked (GlcNAc...) asparagine glycan.

Belongs to the phospholipase B-like family. As to expression, expressed by the venom gland.

The protein resides in the secreted. Its function is as follows. May cause hemolysis or may be involved in protein folding and translation. This chain is Phospholipase B, found in Crotalus adamanteus (Eastern diamondback rattlesnake).